We begin with the raw amino-acid sequence, 286 residues long: Translocon-associated protein subunit alpha (286 aa).

An N-terminal signal peptide occupies residues Met1–Leu20. Residues Leu21 to Thr207 are Lumenal-facing. The span at Glu37–Gly75 shows a compositional bias: acidic residues. Positions Glu37 to Ala83 are disordered. 2 N-linked (GlcNAc...) asparagine glycosylation sites follow: Asn136 and Asn191. Residues Ile208–Leu228 form a helical membrane-spanning segment. The Cytoplasmic segment spans residues Leu229 to Glu286. Ser247 carries the phosphoserine modification. A Phosphothreonine modification is found at Thr260. The segment at Leu261–Glu286 is disordered. Ser268 bears the Phosphoserine mark. The segment covering Ser268–Lys279 has biased composition (basic residues).

The protein belongs to the TRAP-alpha family. In terms of assembly, heterotetramer of TRAP-alpha, TRAP-beta, TRAP-delta and TRAP-gamma. Interacts with palmitoylated calnexin (CALX), the interaction is required for efficient folding of glycosylated proteins. Post-translationally, phosphorylated in its cytoplasmic tail.

It localises to the endoplasmic reticulum membrane. Its function is as follows. TRAP proteins are part of a complex whose function is to bind calcium to the ER membrane and thereby regulate the retention of ER resident proteins. May be involved in the recycling of the translocation apparatus after completion of the translocation process or may function as a membrane-bound chaperone facilitating folding of translocated proteins. In Bos taurus (Bovine), this protein is Translocon-associated protein subunit alpha (SSR1).